We begin with the raw amino-acid sequence, 312 residues long: Urease accessory protein UreD (312 aa).

Belongs to the UreD family. As to quaternary structure, ureD, UreF and UreG form a complex that acts as a GTP-hydrolysis-dependent molecular chaperone, activating the urease apoprotein by helping to assemble the nickel containing metallocenter of UreC. The UreE protein probably delivers the nickel.

Its subcellular location is the cytoplasm. Functionally, required for maturation of urease via the functional incorporation of the urease nickel metallocenter. This is Urease accessory protein UreD from Marinomonas sp. (strain MWYL1).